Reading from the N-terminus, the 37-residue chain is Large ribosomal subunit protein bL36 (37 aa).

Belongs to the bacterial ribosomal protein bL36 family.

The polypeptide is Large ribosomal subunit protein bL36 (Desulforudis audaxviator (strain MP104C)).